The primary structure comprises 150 residues: MYGKIIFVLLLSEIVSISALSTTEVAMHTSTSSSVTKSYISSQTNDTHKRDTYAATPRAHEVSEISVRTVYPPEEETGERVQLAHHFSEPEITLIIFGVMAGVIGTILLISYGIRRLIKKSPSDVKPLPSPDTDVPLSSVEIENPETSDQ.

The signal sequence occupies residues 1–19; that stretch reads MYGKIIFVLLLSEIVSISA. The Extracellular segment spans residues 20–91; that stretch reads LSTTEVAMHT…QLAHHFSEPE (72 aa). A glycan (O-linked (GalNAc...) serine) is linked at serine 21. Threonine 22, threonine 23, and threonine 29 each carry an O-linked (GalNAc...) threonine glycan. Residue serine 30 is glycosylated (O-linked (GalNAc...) serine). Threonine 31 carries an O-linked (GalNAc...) threonine glycan. Residue serine 32 is glycosylated (O-linked (GalNAc...) serine). Threonine 36 is a glycosylation site (O-linked (GalNAc...) threonine). O-linked (GalNAc...) serine glycans are attached at residues serine 38 and serine 41. An O-linked (GalNAc...) threonine glycan is attached at threonine 44. A glycan (N-linked (GlcNAc...) asparagine) is linked at asparagine 45. O-linked (GalNAc...) threonine glycosylation is found at threonine 52 and threonine 56. Serine 63 and serine 66 each carry an O-linked (GalNAc...) serine glycan. O-linked (GalNAc...) threonine glycosylation is present at threonine 69. Residues 92 to 114 form a helical membrane-spanning segment; sequence ITLIIFGVMAGVIGTILLISYGI. At 115 to 150 the chain is on the cytoplasmic side; sequence RRLIKKSPSDVKPLPSPDTDVPLSSVEIENPETSDQ. The tract at residues 121-150 is disordered; sequence SPSDVKPLPSPDTDVPLSSVEIENPETSDQ. Threonine 133 is modified (phosphothreonine). 2 positions are modified to phosphoserine: serine 138 and serine 148.

Belongs to the glycophorin A family. Homodimer. Component of the ankyrin-1 complex in the erythrocyte, composed of ANK1, RHCE, RHAG, SLC4A1, EPB42, GYPA, GYPB and AQP1. Interacts with SLC4A1; a GYPA monomer is bound at each end of the SLC4A1 dimer forming a heterotetramer. In terms of assembly, (Microbial infection) Interacts with Streptococcus gordonii hsa protein. As to quaternary structure, (Microbial infection) Interacts (in a sialic acid-independent manner) with P.falciparum MSP1 subunit p83. Post-translationally, the major O-linked glycan are NeuAc-alpha-(2-3)-Gal-beta-(1-3)-[NeuAc-alpha-(2-6)]-GalNAcOH (about 78 %) and NeuAc-alpha-(2-3)-Gal-beta-(1-3)-GalNAcOH (17 %). Minor O-glycans (5 %) include NeuAc-alpha-(2-3)-Gal-beta-(1-3)-[NeuAc-alpha-(2-6)]-GalNAcOH NeuAc-alpha-(2-8)-NeuAc-alpha-(2-3)-Gal-beta-(1-3)-GalNAcOH. About 1% of all O-linked glycans carry blood group A, B and H determinants. They derive from a type-2 precursor core structure, Gal-beta-(1,3)-GlcNAc-beta-1-R, and the antigens are synthesized by addition of fucose (H antigen-specific) and then N-acetylgalactosamine (A antigen-specific) or galactose (B antigen-specific). Specifically O-linked-glycans are NeuAc-alpha-(2-3)-Gal-beta-(1-3)-GalNAcOH-(6-1)-GlcNAc-beta-(4-1)-[Fuc-alpha-(1-2)]-Gal-beta-(3-1)-GalNAc-alpha (about 1%, B antigen-specific) and NeuAc-alpha-(2-3)-Gal-beta-(1-3)-GalNAcOH-(6-1)-GlcNAc-beta-(4-1)-[Fuc-alpha-(1-2)]-Gal-beta (1 %, O antigen-, A antigen- and B antigen-specific).

It localises to the cell membrane. Its function is as follows. Component of the ankyrin-1 complex, a multiprotein complex involved in the stability and shape of the erythrocyte membrane. Glycophorin A is the major intrinsic membrane protein of the erythrocyte. The N-terminal glycosylated segment, which lies outside the erythrocyte membrane, has MN blood group receptors. Appears to be important for the function of SLC4A1 and is required for high activity of SLC4A1. May be involved in translocation of SLC4A1 to the plasma membrane. In terms of biological role, (Microbial infection) Appears to be a receptor for Hepatitis A virus (HAV). (Microbial infection) Receptor for P.falciparum erythrocyte-binding antigen 175 (EBA-175); binding of EBA-175 is dependent on sialic acid residues of the O-linked glycans. The polypeptide is Glycophorin-A (Homo sapiens (Human)).